Consider the following 186-residue polypeptide: Protein GrpE (186 aa).

The segment covering 1-22 (MSDSNKEKKKKFADMVSKRKGD) has biased composition (basic and acidic residues). Residues 1 to 35 (MSDSNKEKKKKFADMVSKRKGDDQEDQQTGDLSEE) are disordered. Positions 23–34 (DQEDQQTGDLSE) are enriched in acidic residues.

Belongs to the GrpE family. In terms of assembly, homodimer.

It is found in the cytoplasm. Participates actively in the response to hyperosmotic and heat shock by preventing the aggregation of stress-denatured proteins, in association with DnaK and GrpE. It is the nucleotide exchange factor for DnaK and may function as a thermosensor. Unfolded proteins bind initially to DnaJ; upon interaction with the DnaJ-bound protein, DnaK hydrolyzes its bound ATP, resulting in the formation of a stable complex. GrpE releases ADP from DnaK; ATP binding to DnaK triggers the release of the substrate protein, thus completing the reaction cycle. Several rounds of ATP-dependent interactions between DnaJ, DnaK and GrpE are required for fully efficient folding. This is Protein GrpE from Wolbachia pipientis subsp. Culex pipiens (strain wPip).